Here is a 329-residue protein sequence, read N- to C-terminus: Mitochondrial nuclease (329 aa).

His138 acts as the Proton acceptor in catalysis. A Mg(2+)-binding site is contributed by Asn170.

Belongs to the DNA/RNA non-specific endonuclease family. As to quaternary structure, homodimer. Mn(2+) is required as a cofactor. The cofactor is Mg(2+).

It is found in the mitochondrion inner membrane. Functionally, this enzyme has both RNase and DNase activity. This is Mitochondrial nuclease (NUC1) from Saccharomyces cerevisiae (strain ATCC 204508 / S288c) (Baker's yeast).